The following is a 367-amino-acid chain: Flagellar P-ring protein (367 aa).

A signal peptide spans 1 to 21; sequence MYVFKALAGIVLALVATLAHA.

The protein belongs to the FlgI family. The basal body constitutes a major portion of the flagellar organelle and consists of four rings (L,P,S, and M) mounted on a central rod.

It is found in the periplasm. It localises to the bacterial flagellum basal body. Its function is as follows. Assembles around the rod to form the L-ring and probably protects the motor/basal body from shearing forces during rotation. The sequence is that of Flagellar P-ring protein from Salmonella choleraesuis (strain SC-B67).